Here is a 101-residue protein sequence, read N- to C-terminus: uncharacterized protein (101 aa).

This is an uncharacterized protein from Gracula (BFDV).